The chain runs to 860 residues: Leucine--tRNA ligase (860 aa).

The short motif at 42–52 (PYPSGRLHMGH) is the 'HIGH' region element. Residues 619 to 623 (KMSKS) carry the 'KMSKS' region motif. K622 contacts ATP.

The protein belongs to the class-I aminoacyl-tRNA synthetase family.

Its subcellular location is the cytoplasm. It carries out the reaction tRNA(Leu) + L-leucine + ATP = L-leucyl-tRNA(Leu) + AMP + diphosphate. The protein is Leucine--tRNA ligase of Citrobacter koseri (strain ATCC BAA-895 / CDC 4225-83 / SGSC4696).